The sequence spans 499 residues: DNA-directed RNA polymerase subunit Rpo2N (499 aa).

This sequence belongs to the RNA polymerase beta chain family. As to quaternary structure, part of the RNA polymerase complex.

It localises to the cytoplasm. It catalyses the reaction RNA(n) + a ribonucleoside 5'-triphosphate = RNA(n+1) + diphosphate. Functionally, DNA-dependent RNA polymerase (RNAP) catalyzes the transcription of DNA into RNA using the four ribonucleoside triphosphates as substrates. The Rpo2 subunit (Rpo2N and Rpo2C in this organism) is implicated in DNA promoter recognition and in nucleotide binding. The sequence is that of DNA-directed RNA polymerase subunit Rpo2N from Methanococcus vannielii (strain ATCC 35089 / DSM 1224 / JCM 13029 / OCM 148 / SB).